A 285-amino-acid chain; its full sequence is Guanylate kinase 2, chloroplastic/mitochondrial (285 aa).

The segment covering 1–19 (MLLTRRFSSALARSPLLPR) has biased composition (low complexity). Residues 1-42 (MLLTRRFSSALARSPLLPRSLPPPRAVPATPPAPRPPPRRLM) constitute a chloroplast and mitochondrion transit peptide. Residues 1–66 (MLLTRRFSSA…PPPPSGADKD (66 aa)) are disordered. Positions 20–36 (SLPPPRAVPATPPAPRP) are enriched in pro residues. Low complexity predominate over residues 40-50 (RLMSSSSSGWH). Residues 91 to 272 (PMILVISGPS…AVKQVESIID (182 aa)) form the Guanylate kinase-like domain. 98 to 105 (GPSGVGKD) contacts ATP. Residues Arg130, Arg224, and Arg235 contribute to the active site. Residue Asn255 participates in ATP binding.

It belongs to the guanylate kinase family. Monomer.

Its subcellular location is the plastid. It is found in the chloroplast. It localises to the mitochondrion. The enzyme catalyses GMP + ATP = GDP + ADP. Essential for recycling GMP and indirectly, cGMP. Essential for chloroplast differentiation at early stage of leaf development. May not be involved in the synthesis and maintenance of the organellar DNA during leaf development. In Oryza sativa subsp. japonica (Rice), this protein is Guanylate kinase 2, chloroplastic/mitochondrial (V2).